The following is a 29-amino-acid chain: Inorganic pyrophosphatase (29 aa).

The protein resides in the periplasm. It catalyses the reaction diphosphate + H2O = 2 phosphate + H(+). In terms of biological role, inorganic pyrophosphatase is an essential enzyme for the activation of sulfate by sulfate reducing bacteria. This is a high activity pyrophosphatase. The polypeptide is Inorganic pyrophosphatase (Nitratidesulfovibrio vulgaris (strain ATCC 29579 / DSM 644 / CCUG 34227 / NCIMB 8303 / VKM B-1760 / Hildenborough) (Desulfovibrio vulgaris)).